The sequence spans 443 residues: Ribosomal protein uS12 methylthiotransferase RimO (443 aa).

The MTTase N-terminal domain occupies 1–114 (MGFVSLGCPK…VMQAVHTHLP (114 aa)). 6 residues coordinate [4Fe-4S] cluster: Cys8, Cys44, Cys73, Cys145, Cys149, and Cys152. The 242-residue stretch at 131-372 (LTPKHYAYLK…MEVAEEVSAR (242 aa)) folds into the Radical SAM core domain. The TRAM domain maps to 375 to 443 (QRKVGQTLRV…ADGHDLWGAV (69 aa)).

The protein belongs to the methylthiotransferase family. RimO subfamily. The cofactor is [4Fe-4S] cluster.

Its subcellular location is the cytoplasm. It catalyses the reaction L-aspartate(89)-[ribosomal protein uS12]-hydrogen + (sulfur carrier)-SH + AH2 + 2 S-adenosyl-L-methionine = 3-methylsulfanyl-L-aspartate(89)-[ribosomal protein uS12]-hydrogen + (sulfur carrier)-H + 5'-deoxyadenosine + L-methionine + A + S-adenosyl-L-homocysteine + 2 H(+). In terms of biological role, catalyzes the methylthiolation of an aspartic acid residue of ribosomal protein uS12. The chain is Ribosomal protein uS12 methylthiotransferase RimO from Cupriavidus necator (strain ATCC 17699 / DSM 428 / KCTC 22496 / NCIMB 10442 / H16 / Stanier 337) (Ralstonia eutropha).